Consider the following 508-residue polypeptide: Lysine--tRNA ligase (508 aa).

Mg(2+)-binding residues include Glu-418 and Glu-425.

This sequence belongs to the class-II aminoacyl-tRNA synthetase family. Homodimer. It depends on Mg(2+) as a cofactor.

The protein resides in the cytoplasm. It carries out the reaction tRNA(Lys) + L-lysine + ATP = L-lysyl-tRNA(Lys) + AMP + diphosphate. The polypeptide is Lysine--tRNA ligase (Burkholderia pseudomallei (strain 1710b)).